A 290-amino-acid chain; its full sequence is Pirin (290 aa).

4 residues coordinate Fe cation: H56, H58, H101, and E103.

This sequence belongs to the pirin family. As to quaternary structure, may interact with NF1/CTF1. Interacts with BCL3. Identified in a complex comprised of PIR, BLC3, NFKB1 and target DNA. Fe cation serves as cofactor. As to expression, weakly expressed in bone marrow.

The protein localises to the nucleus. Its subcellular location is the cytoplasm. It catalyses the reaction quercetin + O2 = 2-(3,4-dihydroxybenzoyloxy)-4,6-dihydroxybenzoate + CO. The protein operates within flavonoid metabolism; quercetin degradation. Functionally, transcriptional coregulator of NF-kappa-B which facilitates binding of NF-kappa-B proteins to target kappa-B genes in a redox-state-dependent manner. May be required for efficient terminal myeloid maturation of hematopoietic cells. Has quercetin 2,3-dioxygenase activity (in vitro). The protein is Pirin (Pir) of Mus musculus (Mouse).